Reading from the N-terminus, the 92-residue chain is Small ribosomal subunit protein uS19 (92 aa).

It belongs to the universal ribosomal protein uS19 family.

Functionally, protein S19 forms a complex with S13 that binds strongly to the 16S ribosomal RNA. The protein is Small ribosomal subunit protein uS19 of Bartonella henselae (strain ATCC 49882 / DSM 28221 / CCUG 30454 / Houston 1) (Rochalimaea henselae).